The following is a 426-amino-acid chain: MLMKITEFDYRRISELVERARLDVDDVLGPVADIISMVRDGGDDALRELTGRFDGVTVENFRVSREEIEEAHKNLEPGVKEALREAASNIEEFHRMQMPSGWMSEVRPGVMAGQLVRPIDSVGCYIPGGRAVYPSTILMTVIPARIAGVERIVCCTPPAQDGSVPDAVLVAADMAGASEIYRVGGAQAVAAMAYGTETIRPVDKIVGPGNIFVTAAKKLVYGEVDIDFPAGPSEVLIIADETASPEYIALEILAQAEHDPQAASVLVTDSRDLALEVKEMVHENIKYMERANIIRESLERYGMIVLTADIDEAVDFSNAYAPEHLVIMTDSPEETLEGIRNAGSIFLGELSPVAAGDYGSGTNHVLPTSGCARMYSGLSTESFIKKPTVQRITKEGLRNLQGTVLKLAEYEGLHAHAESFRRRLRD.

NAD(+)-binding residues include Tyr-125, Gln-187, and Asn-210. Positions 233, 255, and 258 each coordinate substrate. Residues Gln-255 and His-258 each contribute to the Zn(2+) site. Catalysis depends on proton acceptor residues Glu-323 and His-324. 4 residues coordinate substrate: His-324, Asp-357, Glu-411, and His-416. A Zn(2+)-binding site is contributed by Asp-357. His-416 is a Zn(2+) binding site.

This sequence belongs to the histidinol dehydrogenase family. The cofactor is Zn(2+).

It carries out the reaction L-histidinol + 2 NAD(+) + H2O = L-histidine + 2 NADH + 3 H(+). Its pathway is amino-acid biosynthesis; L-histidine biosynthesis; L-histidine from 5-phospho-alpha-D-ribose 1-diphosphate: step 9/9. Functionally, catalyzes the sequential NAD-dependent oxidations of L-histidinol to L-histidinaldehyde and then to L-histidine. The sequence is that of Histidinol dehydrogenase (hisD) from Methanothermobacter thermautotrophicus (strain ATCC 29096 / DSM 1053 / JCM 10044 / NBRC 100330 / Delta H) (Methanobacterium thermoautotrophicum).